We begin with the raw amino-acid sequence, 277 residues long: Sulfur carrier protein FdhD (277 aa).

Cys121 acts as the Cysteine persulfide intermediate in catalysis. Residue Phe260–Arg265 participates in Mo-bis(molybdopterin guanine dinucleotide) binding.

This sequence belongs to the FdhD family.

It is found in the cytoplasm. Required for formate dehydrogenase (FDH) activity. Acts as a sulfur carrier protein that transfers sulfur from IscS to the molybdenum cofactor prior to its insertion into FDH. This is Sulfur carrier protein FdhD from Shigella flexneri serotype 5b (strain 8401).